Here is a 508-residue protein sequence, read N- to C-terminus: Hydroxymethylglutaryl-CoA synthase, mitochondrial (508 aa).

The N-terminal 37 residues, 1 to 37 (MQRLLAPARRVLQVKRVMQESSLSPAHLLPAAQQRFS), are a transit peptide targeting the mitochondrion. K52 is modified (N6-succinyllysine). (3S)-3-hydroxy-3-methylglutaryl-CoA is bound by residues E80 and A81. N6-acetyllysine; alternate is present on residues K83 and K118. An N6-succinyllysine; alternate mark is found at K83 and K118. E132 (proton donor/acceptor) is an active-site residue. Positions 166, 204, and 208 each coordinate (3S)-3-hydroxy-3-methylglutaryl-CoA. Residue C166 is the Acyl-thioester intermediate of the active site. K221 carries the post-translational modification N6-succinyllysine. Residue K243 is modified to N6-acetyllysine. K256 is modified (N6-acetyllysine; alternate). K256 is modified (N6-succinyllysine; alternate). Residues S258 and H301 each coordinate (3S)-3-hydroxy-3-methylglutaryl-CoA. Catalysis depends on H301, which acts as the Proton donor/acceptor. Position 306 is an N6-acetyllysine (K306). K310 lines the (3S)-3-hydroxy-3-methylglutaryl-CoA pocket. Residues K310 and K327 each carry the N6-acetyllysine; alternate modification. N6-succinyllysine; alternate is present on residues K310 and K327. The residue at position 333 (K333) is an N6-succinyllysine. 4 positions are modified to N6-acetyllysine; alternate: K342, K350, K354, and K358. An N6-succinyllysine; alternate mark is found at K342, K350, K354, and K358. Residues N380 and S414 each coordinate (3S)-3-hydroxy-3-methylglutaryl-CoA. K427 bears the N6-acetyllysine mark. S433 carries the post-translational modification Phosphoserine. K437 bears the N6-acetyllysine mark. A Phosphoserine modification is found at S440. At K447 the chain carries N6-acetyllysine; alternate. K447 is modified (N6-succinyllysine; alternate). A Phosphoserine modification is found at S456. K473 carries the N6-acetyllysine; alternate modification. K473 carries the post-translational modification N6-succinyllysine; alternate. S477 is subject to Phosphoserine.

The protein belongs to the thiolase-like superfamily. HMG-CoA synthase family. Homodimer. In terms of processing, succinylated. Desuccinylated by SIRT5. Succinylation, at least at Lys-83 and Lys-310, inhibits the enzymatic activity. In terms of tissue distribution, liver and kidney.

It is found in the mitochondrion. It carries out the reaction acetoacetyl-CoA + acetyl-CoA + H2O = (3S)-3-hydroxy-3-methylglutaryl-CoA + CoA + H(+). Its pathway is metabolic intermediate biosynthesis; (R)-mevalonate biosynthesis; (R)-mevalonate from acetyl-CoA: step 2/3. Its function is as follows. Catalyzes the first irreversible step in ketogenesis, condensing acetyl-CoA to acetoacetyl-CoA to form HMG-CoA, which is converted by HMG-CoA reductase (HMGCR) into mevalonate. The polypeptide is Hydroxymethylglutaryl-CoA synthase, mitochondrial (Hmgcs2) (Rattus norvegicus (Rat)).